The following is a 481-amino-acid chain: Delta(14)-sterol reductase ERG24B (481 aa).

8 helical membrane-spanning segments follow: residues F11–L31, L80–L100, L125–I145, Y149–L169, T244–L264, I279–L299, H313–F333, and A427–I447.

This sequence belongs to the ERG4/ERG24 family.

It is found in the endoplasmic reticulum membrane. It catalyses the reaction 4,4-dimethyl-5alpha-cholesta-8,24-dien-3beta-ol + NADP(+) = 4,4-dimethyl-5alpha-cholesta-8,14,24-trien-3beta-ol + NADPH + H(+). It participates in steroid metabolism; ergosterol biosynthesis. Delta(14)-sterol reductase; part of the third module of ergosterol biosynthesis pathway that includes the late steps of the pathway. Catalyzes the reduction of the C14=C15 double bond within 4,4,24-trimethyl ergosta-8,14,24(28)-trienolto produce 4,4-dimethylfecosterol. The third module or late pathway involves the ergosterol synthesis itself through consecutive reactions that mainly occur in the endoplasmic reticulum (ER) membrane. Firstly, the squalene synthase ERG9 catalyzes the condensation of 2 farnesyl pyrophosphate moieties to form squalene, which is the precursor of all steroids. Squalene synthase is crucial for balancing the incorporation of farnesyl diphosphate (FPP) into sterol and nonsterol isoprene synthesis. Secondly, squalene is converted into lanosterol by the consecutive action of the squalene epoxidase ERG1 and the lanosterol synthase ERG7. Then, the delta(24)-sterol C-methyltransferase ERG6 methylates lanosterol at C-24 to produce eburicol. Eburicol is the substrate of the sterol 14-alpha demethylase encoded by CYP51A, CYP51B and CYP51C, to yield 4,4,24-trimethyl ergosta-8,14,24(28)-trienol. CYP51B encodes the enzyme primarily responsible for sterol 14-alpha-demethylation, and plays an essential role in ascospore formation. CYP51A encodes an additional sterol 14-alpha-demethylase, induced on ergosterol depletion and responsible for the intrinsic variation in azole sensitivity. The third CYP51 isoform, CYP51C, does not encode a sterol 14-alpha-demethylase, but is required for full virulence on host wheat ears. The C-14 reductase ERG24 then reduces the C14=C15 double bond which leads to 4,4-dimethylfecosterol. A sequence of further demethylations at C-4, involving the C-4 demethylation complex containing the C-4 methylsterol oxidases ERG25, the sterol-4-alpha-carboxylate 3-dehydrogenase ERG26 and the 3-keto-steroid reductase ERG27, leads to the production of fecosterol via 4-methylfecosterol. ERG28 has a role as a scaffold to help anchor ERG25, ERG26 and ERG27 to the endoplasmic reticulum. The C-8 sterol isomerase ERG2 then catalyzes the reaction which results in unsaturation at C-7 in the B ring of sterols and thus converts fecosterol to episterol. The sterol-C5-desaturases ERG3A and ERG3BB then catalyze the introduction of a C-5 double bond in the B ring to produce 5-dehydroepisterol. The C-22 sterol desaturases ERG5A and ERG5B further convert 5-dehydroepisterol into ergosta-5,7,22,24(28)-tetraen-3beta-ol by forming the C-22(23) double bond in the sterol side chain. Finally, ergosta-5,7,22,24(28)-tetraen-3beta-ol is substrate of the C-24(28) sterol reductase ERG4 to produce ergosterol. In Gibberella zeae (strain ATCC MYA-4620 / CBS 123657 / FGSC 9075 / NRRL 31084 / PH-1) (Wheat head blight fungus), this protein is Delta(14)-sterol reductase ERG24B.